Here is a 393-residue protein sequence, read N- to C-terminus: Methyltransferase-like protein 22 (393 aa).

The interval 54-87 (WTDSGAEDSGPTDVSTEEMPPAGSGSGHSHEDLS) is disordered. S120 bears the Phosphoserine mark.

This sequence belongs to the methyltransferase superfamily. METTL22 family. Interacts with members of the heat shock protein 90 and 70 families; these proteins probably are methylation substrates.

It localises to the nucleus. It carries out the reaction L-lysyl-[protein] + 3 S-adenosyl-L-methionine = N(6),N(6),N(6)-trimethyl-L-lysyl-[protein] + 3 S-adenosyl-L-homocysteine + 3 H(+). Its function is as follows. Protein N-lysine methyltransferase. Trimethylates KIN at Lys-135 (in vitro). This is Methyltransferase-like protein 22 (Mettl22) from Mus musculus (Mouse).